Here is a 500-residue protein sequence, read N- to C-terminus: E3 ubiquitin-protein ligase TRIM69 (500 aa).

A necessary for nuclear localization region spans residues 1–152 (MEVSTNPSSN…SVGQSKEFLQ (152 aa)). The RING-type zinc finger occupies 41-82 (CPLCNDWFRDPLMLSCGHNFCEACIQDFWRLQAKETFCPECK). The stretch at 161–255 (TEELAIQQGQ…QCLLAKDMLV (95 aa)) forms a coiled coil. The B30.2/SPRY domain occupies 305–500 (PIQYMVWREM…KEPLHILHPQ (196 aa)). A Phosphoserine modification is found at Ser-341.

This sequence belongs to the TRIM/RBCC family. As to quaternary structure, homo-multimer; required for antiviral activity. Interacts with PML. In terms of processing, phosphorylated. Phosphorylation is necessary for nuclear localization.

The protein resides in the cytoplasm. Its subcellular location is the nucleus. It is found in the nucleus speckle. The protein localises to the cytoskeleton. It localises to the microtubule organizing center. The protein resides in the centrosome. The catalysed reaction is S-ubiquitinyl-[E2 ubiquitin-conjugating enzyme]-L-cysteine + [acceptor protein]-L-lysine = [E2 ubiquitin-conjugating enzyme]-L-cysteine + N(6)-ubiquitinyl-[acceptor protein]-L-lysine.. It participates in protein modification; protein ubiquitination. In terms of biological role, E3 ubiquitin ligase that plays an important role in antiviral immunity by restricting different viral infections including dengue virus or vesicular stomatitis indiana virus. Ubiquitinates viral proteins such as dengue virus NS3 thereby limiting infection. In addition, acts as a key mediator of type I interferon induced microtubule stabilization by directly associating to microtubules independently of its E3 ligase activity. Also plays a role in cataract formation together with TP53. Mechanistically, inhibits UVB-induced cell apoptosis and reactive oxygen species (ROS) production by inducing TP53 ubiquitination. Regulates centrosome dynamics and mitotic progression by ubiquitinating STK3/MST2; leading to its redistribution to the perinuclear cytoskeleton and subsequent phosphorylation by PLK1. The sequence is that of E3 ubiquitin-protein ligase TRIM69 (TRIM69) from Homo sapiens (Human).